The sequence spans 286 residues: Bifunctional protein FolD (286 aa).

NADP(+)-binding positions include 166-168 (GAS) and Ile-232.

Belongs to the tetrahydrofolate dehydrogenase/cyclohydrolase family. In terms of assembly, homodimer.

It catalyses the reaction (6R)-5,10-methylene-5,6,7,8-tetrahydrofolate + NADP(+) = (6R)-5,10-methenyltetrahydrofolate + NADPH. It carries out the reaction (6R)-5,10-methenyltetrahydrofolate + H2O = (6R)-10-formyltetrahydrofolate + H(+). It functions in the pathway one-carbon metabolism; tetrahydrofolate interconversion. In terms of biological role, catalyzes the oxidation of 5,10-methylenetetrahydrofolate to 5,10-methenyltetrahydrofolate and then the hydrolysis of 5,10-methenyltetrahydrofolate to 10-formyltetrahydrofolate. The sequence is that of Bifunctional protein FolD from Vibrio cholerae serotype O1 (strain ATCC 39541 / Classical Ogawa 395 / O395).